The following is a 319-amino-acid chain: Ficolin-2 (319 aa).

Positions 1–22 (MVLGSAALFVLSLCVTELTLHA) are cleaved as a signal peptide. The Collagen-like domain occupies 45–101 (GCPGLPGALGPKGEAGAKGDRGESGLPGHPGKAGPTGPKGDRGEKGVRGEKGDTGPS). Residues 53 to 106 (LGPKGEAGAKGDRGESGLPGHPGKAGPTGPKGDRGEKGVRGEKGDTGPSQSCAT) form a disordered region. Positions 83-97 (KGDRGEKGVRGEKGD) are enriched in basic and acidic residues. Residues 102 to 319 (QSCATGPRTC…KVSEMKVRLI (218 aa)) enclose the Fibrinogen C-terminal domain. Disulfide bonds link Cys104–Cys132 and Cys111–Cys139. Asp255, Asp257, and Ser261 together coordinate Ca(2+). Cys263 and Cys276 form a disulfide bridge. A glycan (N-linked (GlcNAc...) asparagine) is linked at Asn306.

Belongs to the ficolin lectin family. Homotrimer. Interacts with elastin. Interacts with MASP1 and MASP2.

Its subcellular location is the secreted. May function in innate immunity through activation of the lectin complement pathway. Calcium-dependent and GlcNAc-binding lectin. The chain is Ficolin-2 (Fcn2) from Rattus norvegicus (Rat).